Reading from the N-terminus, the 393-residue chain is Methylthioribose-1-phosphate isomerase (393 aa).

The active-site Proton donor is the D265.

The protein belongs to the eIF-2B alpha/beta/delta subunits family. MtnA subfamily.

Its subcellular location is the cytoplasm. The protein localises to the nucleus. The catalysed reaction is 5-(methylsulfanyl)-alpha-D-ribose 1-phosphate = 5-(methylsulfanyl)-D-ribulose 1-phosphate. It participates in amino-acid biosynthesis; L-methionine biosynthesis via salvage pathway; L-methionine from S-methyl-5-thio-alpha-D-ribose 1-phosphate: step 1/6. Functionally, catalyzes the interconversion of methylthioribose-1-phosphate (MTR-1-P) into methylthioribulose-1-phosphate (MTRu-1-P). This Cryptococcus neoformans var. neoformans serotype D (strain B-3501A) (Filobasidiella neoformans) protein is Methylthioribose-1-phosphate isomerase.